The following is a 218-amino-acid chain: NAD(P)H-quinone oxidoreductase subunit I (218 aa).

4Fe-4S ferredoxin-type domains are found at residues 55 to 84 and 95 to 124; these read GRIH…VDWV and RNYS…MTEE. [4Fe-4S] cluster is bound by residues Cys64, Cys67, Cys70, Cys74, Cys104, Cys107, Cys110, and Cys114. Positions 169–218 are disordered; sequence MDPHELPANQQRAGKLPSQIIKELQAEKSEEKGNNNSSDIVPNKLNSTNK. The span at 192 to 201 shows a compositional bias: basic and acidic residues; that stretch reads LQAEKSEEKG. Over residues 202 to 218 the composition is skewed to polar residues; it reads NNNSSDIVPNKLNSTNK.

It belongs to the complex I 23 kDa subunit family. NDH-1 is composed of at least 11 different subunits. [4Fe-4S] cluster is required as a cofactor.

It is found in the cellular thylakoid membrane. The enzyme catalyses a plastoquinone + NADH + (n+1) H(+)(in) = a plastoquinol + NAD(+) + n H(+)(out). It catalyses the reaction a plastoquinone + NADPH + (n+1) H(+)(in) = a plastoquinol + NADP(+) + n H(+)(out). Functionally, NDH-1 shuttles electrons from an unknown electron donor, via FMN and iron-sulfur (Fe-S) centers, to quinones in the respiratory and/or the photosynthetic chain. The immediate electron acceptor for the enzyme in this species is believed to be plastoquinone. Couples the redox reaction to proton translocation, and thus conserves the redox energy in a proton gradient. This is NAD(P)H-quinone oxidoreductase subunit I from Prochlorococcus marinus (strain NATL1A).